Here is a 54-residue protein sequence, read N- to C-terminus: Ovomucoid (54 aa).

Residues 4 to 54 (VDCSEHPKPACTLEDRPLCGSDNKIYSNKCDFCNAVLESNGTLTLSHFGKC) enclose the Kazal-like domain. Disulfide bonds link C6–C36, C14–C33, and C22–C54. A glycan (N-linked (GlcNAc...) asparagine) is linked at N43.

Its subcellular location is the secreted. The polypeptide is Ovomucoid (Argusianus argus (Great argus)).